Consider the following 87-residue polypeptide: Large ribosomal subunit protein bL27 (87 aa).

It belongs to the bacterial ribosomal protein bL27 family.

The chain is Large ribosomal subunit protein bL27 from Dechloromonas aromatica (strain RCB).